A 174-amino-acid polypeptide reads, in one-letter code: MSLNRQEKAVVIEEVSAQVAKAQSIVIAEYRGLDVASVTVLRKTARESGVYLRVLKNTLVRRAVAGTAFEPLSEQLTGPLIYGISADPVAAAKVLAGFAKSNDKLVIKAGSLPNSLLTQDGVKALATMPSREELLSKLLGTMQAPIAQFVRTLNEVPTKFARGLAAVRDQKAAA.

Belongs to the universal ribosomal protein uL10 family. Part of the ribosomal stalk of the 50S ribosomal subunit. The N-terminus interacts with L11 and the large rRNA to form the base of the stalk. The C-terminus forms an elongated spine to which L12 dimers bind in a sequential fashion forming a multimeric L10(L12)X complex.

Functionally, forms part of the ribosomal stalk, playing a central role in the interaction of the ribosome with GTP-bound translation factors. The sequence is that of Large ribosomal subunit protein uL10 from Bordetella bronchiseptica (strain ATCC BAA-588 / NCTC 13252 / RB50) (Alcaligenes bronchisepticus).